Reading from the N-terminus, the 183-residue chain is dTDP-4-dehydrorhamnose 3,5-epimerase (183 aa).

Substrate contacts are provided by residues arginine 24, glutamate 29, 48–50 (QDN), and arginine 60. Histidine 63 acts as the Proton acceptor in catalysis. Substrate-binding residues include lysine 73 and histidine 120. The active-site Proton donor is tyrosine 133. Substrate is bound by residues glutamate 144 and lysine 169.

The protein belongs to the dTDP-4-dehydrorhamnose 3,5-epimerase family. Homodimer.

It catalyses the reaction dTDP-4-dehydro-6-deoxy-alpha-D-glucose = dTDP-4-dehydro-beta-L-rhamnose. Its pathway is carbohydrate biosynthesis; dTDP-L-rhamnose biosynthesis. It participates in bacterial outer membrane biogenesis; LPS O-antigen biosynthesis. In terms of biological role, catalyzes the epimerization of the C3' and C5'positions of dTDP-6-deoxy-D-xylo-4-hexulose, forming dTDP-6-deoxy-L-lyxo-4-hexulose. The protein is dTDP-4-dehydrorhamnose 3,5-epimerase of Salmonella typhimurium (strain LT2 / SGSC1412 / ATCC 700720).